The primary structure comprises 369 residues: UDP-glucose 4-epimerase 4 (369 aa).

19–50 (TVLVTGGAGYIGSHTVLQLLAAGFRVVVADSL) is a binding site for NAD(+). Ser144 lines the substrate pocket. Tyr168 functions as the Proton acceptor in the catalytic mechanism.

It belongs to the NAD(P)-dependent epimerase/dehydratase family. NAD(+) serves as cofactor.

It catalyses the reaction UDP-alpha-D-glucose = UDP-alpha-D-galactose. It functions in the pathway carbohydrate metabolism; galactose metabolism. Its function is as follows. Catalyzes the interconversion between UDP-glucose and UDP-galactose. The sequence is that of UDP-glucose 4-epimerase 4 (UGE-4) from Oryza sativa subsp. japonica (Rice).